Consider the following 237-residue polypeptide: MRQHVNPLSRFFQLPLELPAPHELFEHPNLPIHLDIGCARGFFLLELAAMQPERNHLGVEIRRPLVQAAQHDRDRQEQHNLHFLFCNANISLEAWMAALPPDQLQLVSIQFPDPWFKQRHRKRRVLQPALLLAIAAALHPGRHLFLQSDVLAVIEPMVALVELSNCFARPKDDPQPWRSSNPLPVATERERYVQEQGQPTYRVLFERTQAELPALRDLEMAWQQVDNSKDAAPTPHG.

Residues Asp35, Glu60, Asn87, and Asp113 each coordinate S-adenosyl-L-methionine. The active site involves Asp113. Lys117 and Asp149 together coordinate substrate.

The protein belongs to the class I-like SAM-binding methyltransferase superfamily. TrmB family.

The catalysed reaction is guanosine(46) in tRNA + S-adenosyl-L-methionine = N(7)-methylguanosine(46) in tRNA + S-adenosyl-L-homocysteine. It participates in tRNA modification; N(7)-methylguanine-tRNA biosynthesis. Functionally, catalyzes the formation of N(7)-methylguanine at position 46 (m7G46) in tRNA. The protein is tRNA (guanine-N(7)-)-methyltransferase of Synechococcus sp. (strain CC9311).